The primary structure comprises 473 residues: Photosystem II CP43 reaction center protein (473 aa).

A propeptide spanning residues 1–14 is cleaved from the precursor; sequence MKTLYSLRRFYHVE. Thr15 carries the post-translational modification N-acetylthreonine. Residue Thr15 is modified to Phosphothreonine. The next 5 membrane-spanning stretches (helical) occupy residues 69 to 93, 134 to 155, 178 to 200, 255 to 275, and 291 to 312; these read LFEV…PHLA, LLGP…KDRN, KALY…RKIT, KPFA…LSYS, and WFNN…ASQA. Glu367 is a [CaMn4O5] cluster binding site. The helical transmembrane segment at 447-471 threads the bilayer; that stretch reads RARAAAAGFEKGIDRDFEPVLSMTP.

It belongs to the PsbB/PsbC family. PsbC subfamily. In terms of assembly, PSII is composed of 1 copy each of membrane proteins PsbA, PsbB, PsbC, PsbD, PsbE, PsbF, PsbH, PsbI, PsbJ, PsbK, PsbL, PsbM, PsbT, PsbX, PsbY, PsbZ, Psb30/Ycf12, at least 3 peripheral proteins of the oxygen-evolving complex and a large number of cofactors. It forms dimeric complexes. Binds multiple chlorophylls and provides some of the ligands for the Ca-4Mn-5O cluster of the oxygen-evolving complex. It may also provide a ligand for a Cl- that is required for oxygen evolution. PSII binds additional chlorophylls, carotenoids and specific lipids. serves as cofactor.

It is found in the plastid. Its subcellular location is the chloroplast thylakoid membrane. One of the components of the core complex of photosystem II (PSII). It binds chlorophyll and helps catalyze the primary light-induced photochemical processes of PSII. PSII is a light-driven water:plastoquinone oxidoreductase, using light energy to abstract electrons from H(2)O, generating O(2) and a proton gradient subsequently used for ATP formation. The polypeptide is Photosystem II CP43 reaction center protein (Nicotiana tabacum (Common tobacco)).